Here is a 40-residue protein sequence, read N- to C-terminus: Photosystem II reaction center protein J (40 aa).

A helical transmembrane segment spans residues 8–28; it reads IPLWLVGTVAGILVIGLIGIF.

It belongs to the PsbJ family. In terms of assembly, PSII is composed of 1 copy each of membrane proteins PsbA, PsbB, PsbC, PsbD, PsbE, PsbF, PsbH, PsbI, PsbJ, PsbK, PsbL, PsbM, PsbT, PsbX, PsbY, PsbZ, Psb30/Ycf12, at least 3 peripheral proteins of the oxygen-evolving complex and a large number of cofactors. It forms dimeric complexes.

It is found in the plastid. The protein resides in the chloroplast thylakoid membrane. In terms of biological role, one of the components of the core complex of photosystem II (PSII). PSII is a light-driven water:plastoquinone oxidoreductase that uses light energy to abstract electrons from H(2)O, generating O(2) and a proton gradient subsequently used for ATP formation. It consists of a core antenna complex that captures photons, and an electron transfer chain that converts photonic excitation into a charge separation. This Gnetum parvifolium (Small-leaved jointfir) protein is Photosystem II reaction center protein J.